A 448-amino-acid chain; its full sequence is N-succinylarginine dihydrolase (448 aa).

Substrate-binding positions include 19 to 28 (AGLSYGNVAS), N110, and 137 to 138 (HR). The active site involves E174. A substrate-binding site is contributed by R214. The active site involves H250. Substrate-binding residues include D252 and N364. Catalysis depends on C370, which acts as the Nucleophile.

It belongs to the succinylarginine dihydrolase family. As to quaternary structure, homodimer.

The catalysed reaction is N(2)-succinyl-L-arginine + 2 H2O + 2 H(+) = N(2)-succinyl-L-ornithine + 2 NH4(+) + CO2. It participates in amino-acid degradation; L-arginine degradation via AST pathway; L-glutamate and succinate from L-arginine: step 2/5. Its function is as follows. Catalyzes the hydrolysis of N(2)-succinylarginine into N(2)-succinylornithine, ammonia and CO(2). This chain is N-succinylarginine dihydrolase, found in Pseudoalteromonas translucida (strain TAC 125).